Reading from the N-terminus, the 249-residue chain is Transcription factor MYB90 (249 aa).

2 consecutive HTH myb-type domains span residues 5–57 (SKGL…LNYL) and 58–112 (KPSI…SKKH). 2 consecutive DNA-binding regions (H-T-H motif) follow at residues 33–57 (WHQV…LNYL) and 85–108 (WSLI…NTHL).

Interacts with BHLH12/MYC1, BHLH1/GL3/MYC6, BHLH2/EGL3/MYC146, and BHLH42/TT8. As to expression, expressed only in leaves and siliques.

The protein resides in the nucleus. Its function is as follows. Transcription activator, when associated with BHLH12/MYC1, EGL3, or GL3. Promotes the synthesis of phenylpropanoid-derived compounds such as anthocyanins. This Arabidopsis thaliana (Mouse-ear cress) protein is Transcription factor MYB90 (MYB90).